Consider the following 45-residue polypeptide: Large ribosomal subunit protein bL34 (45 aa).

This sequence belongs to the bacterial ribosomal protein bL34 family.

This Opitutus terrae (strain DSM 11246 / JCM 15787 / PB90-1) protein is Large ribosomal subunit protein bL34.